We begin with the raw amino-acid sequence, 355 residues long: Tetraacyldisaccharide 4'-kinase (355 aa).

Residue 49–56 coordinates ATP; that stretch reads TAGGTGKT.

This sequence belongs to the LpxK family.

It carries out the reaction a lipid A disaccharide + ATP = a lipid IVA + ADP + H(+). The protein operates within glycolipid biosynthesis; lipid IV(A) biosynthesis; lipid IV(A) from (3R)-3-hydroxytetradecanoyl-[acyl-carrier-protein] and UDP-N-acetyl-alpha-D-glucosamine: step 6/6. Its function is as follows. Transfers the gamma-phosphate of ATP to the 4'-position of a tetraacyldisaccharide 1-phosphate intermediate (termed DS-1-P) to form tetraacyldisaccharide 1,4'-bis-phosphate (lipid IVA). The sequence is that of Tetraacyldisaccharide 4'-kinase from Chlorobium luteolum (strain DSM 273 / BCRC 81028 / 2530) (Pelodictyon luteolum).